The primary structure comprises 271 residues: MISSYKYNPKLYFLSTFVVTYILWFTGAYLSFSSTYSGIYMLIMLPGLMAPFIISTILIAKSKNNELKKDFINRLFNLKLINLKTIPVVFLLMPAVILLSILLSIPFGGSISQFQFSGGFSFSTDFVPVLFLLLLAATFEELGWRGYAFDSLQSRYSLFKASILFGIFWSLWHFPLIFVNNSYQYEIFNQSIWYGLNFFLSILPMGIIITWMCLKNRKSIILAIIFHFLINLNQELLAITQDTKIIETGVLFLVAAAIILYDKKMFFEKLG.

Residues 1–9 (MISSYKYNP) lie on the Extracellular side of the membrane. A helical transmembrane segment spans residues 10 to 30 (KLYFLSTFVVTYILWFTGAYL). At 31–38 (SFSSTYSG) the chain is on the cytoplasmic side. A helical transmembrane segment spans residues 39 to 59 (IYMLIMLPGLMAPFIISTILI). Residues 60 to 82 (AKSKNNELKKDFINRLFNLKLIN) lie on the Extracellular side of the membrane. Residues 83–105 (LKTIPVVFLLMPAVILLSILLSI) traverse the membrane as a helical segment. Over 106–125 (PFGGSISQFQFSGGFSFSTD) the chain is Cytoplasmic. Residues 126–149 (FVPVLFLLLLAATFEELGWRGYAF) traverse the membrane as a helical segment. The active-site Proton donor/acceptor is the Glu-140. The Extracellular portion of the chain corresponds to 150-159 (DSLQSRYSLF). The chain crosses the membrane as a helical span at residues 160-179 (KASILFGIFWSLWHFPLIFV). His-173 acts as the Proton donor/acceptor in catalysis. Residues 180 to 192 (NNSYQYEIFNQSI) are Cytoplasmic-facing. The chain crosses the membrane as a helical span at residues 193–213 (WYGLNFFLSILPMGIIITWMC). Residues 214–219 (LKNRKS) are Extracellular-facing. A helical transmembrane segment spans residues 220–237 (IILAIIFHFLINLNQELL). Residues 238 to 243 (AITQDT) lie on the Cytoplasmic side of the membrane. The helical transmembrane segment at 244–263 (KIIETGVLFLVAAAIILYDK) threads the bilayer. Residues 264–271 (KMFFEKLG) lie on the Extracellular side of the membrane.

The protein belongs to the peptidase U48 family.

The protein localises to the cell membrane. It catalyses the reaction Hydrolyzes the peptide bond -P2-(S-farnesyl or geranylgeranyl)C-P1'-P2'-P3'-COOH where P1' and P2' are amino acids with aliphatic sidechains and P3' is any C-terminal residue.. Activity is unaffected by metalloprotease inhibitors 5 mM EDTA and 5 mM Zn(2+). Activity partially inhibited by 1,10-phenanthroline and 1,7-phenanthroline. Functionally, protease involved in the processing of a variety of prenylated proteins containing the C-terminal CAAX motif, where C is a cysteine modified with an isoprenoid lipid, A is an aliphatic amino acid and X is any C-terminal amino acid. Proteolytically removes the C-terminal three residues of farnesylated proteins, leaving the prenylated cysteine as the new C-terminus. Hydrolysis depends on a farnesylated cysteine residue and no activity is shown towards geranylgeranylated peptides. This Methanococcus maripaludis (strain DSM 14266 / JCM 13030 / NBRC 101832 / S2 / LL) protein is CAAX prenyl protease 2.